Reading from the N-terminus, the 433-residue chain is Phosphomethylpyrimidine synthase 2 (433 aa).

Substrate contacts are provided by residues N66, M94, Y123, H162, 184–186 (SRG), 225–228 (DALR), and E264. A Zn(2+)-binding site is contributed by H268. Position 291 (Y291) interacts with substrate. A Zn(2+)-binding site is contributed by H332. The [4Fe-4S] cluster site is built by C408, C411, and C415.

Belongs to the ThiC family. Requires [4Fe-4S] cluster as cofactor.

It catalyses the reaction 5-amino-1-(5-phospho-beta-D-ribosyl)imidazole + S-adenosyl-L-methionine = 4-amino-2-methyl-5-(phosphooxymethyl)pyrimidine + CO + 5'-deoxyadenosine + formate + L-methionine + 3 H(+). It functions in the pathway cofactor biosynthesis; thiamine diphosphate biosynthesis. Its function is as follows. Catalyzes the synthesis of the hydroxymethylpyrimidine phosphate (HMP-P) moiety of thiamine from aminoimidazole ribotide (AIR) in a radical S-adenosyl-L-methionine (SAM)-dependent reaction. This chain is Phosphomethylpyrimidine synthase 2, found in Saccharolobus solfataricus (strain ATCC 35092 / DSM 1617 / JCM 11322 / P2) (Sulfolobus solfataricus).